Reading from the N-terminus, the 143-residue chain is GAFIMPGTLWCGAGNAASDYSQLGTEKDTDMCCRDHDHCENWISALEYKHGMRNYYPSTISHCDCDNQFRSCLMKLKDGTADYVGQTYFNVLKIPCFELEEGEGCVDWNFWLECTESKIMPVAKLVSAAPYQAQAETQSGEGR.

3 residues coordinate Ca(2+): Trp10, Gly12, and Gly14. 3 disulfides stabilise this stretch: Cys11/Cys33, Cys32/Cys72, and Cys39/Cys65. His36 is an active-site residue. Residue Asp37 coordinates Ca(2+).

Belongs to the phospholipase A2 family. Group III subfamily. Requires Ca(2+) as cofactor. In terms of tissue distribution, expressed by the venom gland.

It is found in the secreted. It catalyses the reaction a 1,2-diacyl-sn-glycero-3-phosphocholine + H2O = a 1-acyl-sn-glycero-3-phosphocholine + a fatty acid + H(+). In terms of biological role, PLA2 catalyzes the calcium-dependent hydrolysis of the 2-acyl groups in 3-sn-phosphoglycerides. In Heloderma suspectum (Gila monster), this protein is Phospholipase A2 isozymes PA3A/PA3B/PA5.